A 209-amino-acid polypeptide reads, in one-letter code: Uridine kinase (209 aa).

Position 12-19 (12-19 (GGSGGGKT)) interacts with ATP.

This sequence belongs to the uridine kinase family.

The protein localises to the cytoplasm. The catalysed reaction is uridine + ATP = UMP + ADP + H(+). The enzyme catalyses cytidine + ATP = CMP + ADP + H(+). It participates in pyrimidine metabolism; CTP biosynthesis via salvage pathway; CTP from cytidine: step 1/3. It functions in the pathway pyrimidine metabolism; UMP biosynthesis via salvage pathway; UMP from uridine: step 1/1. The sequence is that of Uridine kinase from Streptococcus agalactiae serotype III (strain NEM316).